The primary structure comprises 993 residues: Serine/threonine-protein phosphatase 6 regulatory ankyrin repeat subunit B (993 aa).

28 ANK repeats span residues 7 to 36 (TDQP…DVNT), 40 to 69 (EKRT…RVNA), 73 to 102 (MWLT…DVNA), 106 to 135 (NWQT…SVNV), 139 to 168 (GGRT…NINA), 172 to 201 (KDRR…EVTC), 205 to 234 (KGYT…EIDE), 238 to 267 (YGNT…NVNQ), 271 to 301 (NGFT…DVNI), 305 to 334 (DGKS…EIDC), 338 to 367 (DGNT…DTAK), 371 to 400 (HSMF…EIDT), 404 to 433 (FGRT…DFHK), 437 to 466 (CGRT…NVNE), 470 to 498 (WGRT…DNSE), 531 to 561 (EGYN…GFEE), 566 to 595 (ATKS…DLDI), 599 to 628 (KGRT…SIFV), 633 to 662 (TKRT…NPEA), 669 to 698 (KGQT…NVDT), 702 to 731 (LGCT…SILC), 735 to 764 (RGRT…SEED), 771 to 800 (QGYT…FRKF), 803 to 832 (NPFT…SSIV), 838 to 867 (KGRT…PVNA), 871 to 901 (SGKT…DLTV), 905 to 934 (DLNT…DESL), and 941 to 970 (ALQT…CVLA).

As to quaternary structure, protein phosphatase 6 (PP6) holoenzyme is proposed to be a heterotrimeric complex formed by the catalytic subunit, a SAPS domain-containing subunit (PP6R) and an ankyrin repeat-domain containing regulatory subunit (ARS). Interacts with PPP6R1.

Its function is as follows. Putative regulatory subunit of protein phosphatase 6 (PP6) that may be involved in the recognition of phosphoprotein substrates. The sequence is that of Serine/threonine-protein phosphatase 6 regulatory ankyrin repeat subunit B (ANKRD44) from Homo sapiens (Human).